The sequence spans 264 residues: Proteasome subunit alpha type-4 (264 aa).

The protein belongs to the peptidase T1A family. In terms of assembly, the 26S proteasome consists of a 20S proteasome core and two 19S regulatory subunits. The 20S proteasome core is composed of 28 subunits that are arranged in four stacked rings, resulting in a barrel-shaped structure. The two end rings are each formed by seven alpha subunits, and the two central rings are each formed by seven beta subunits. The catalytic chamber with the active sites is on the inside of the barrel. Interacts with PI31.

The protein localises to the cytoplasm. Its subcellular location is the nucleus. Its function is as follows. The proteasome is a multicatalytic proteinase complex which is characterized by its ability to cleave peptides with Arg, Phe, Tyr, Leu, and Glu adjacent to the leaving group at neutral or slightly basic pH. The proteasome has an ATP-dependent proteolytic activity. The protein is Proteasome subunit alpha type-4 (Prosalpha3) of Drosophila melanogaster (Fruit fly).